Consider the following 361-residue polypeptide: S-adenosylmethionine:tRNA ribosyltransferase-isomerase (361 aa).

This sequence belongs to the QueA family. As to quaternary structure, monomer.

Its subcellular location is the cytoplasm. It catalyses the reaction 7-aminomethyl-7-carbaguanosine(34) in tRNA + S-adenosyl-L-methionine = epoxyqueuosine(34) in tRNA + adenine + L-methionine + 2 H(+). Its pathway is tRNA modification; tRNA-queuosine biosynthesis. In terms of biological role, transfers and isomerizes the ribose moiety from AdoMet to the 7-aminomethyl group of 7-deazaguanine (preQ1-tRNA) to give epoxyqueuosine (oQ-tRNA). The protein is S-adenosylmethionine:tRNA ribosyltransferase-isomerase of Rhizobium johnstonii (strain DSM 114642 / LMG 32736 / 3841) (Rhizobium leguminosarum bv. viciae).